Consider the following 505-residue polypeptide: 2,3-bisphosphoglycerate-independent phosphoglycerate mutase (505 aa).

D12 and S62 together coordinate Mn(2+). The active-site Phosphoserine intermediate is the S62. Residues H123, 153 to 154 (RD), R185, R191, 257 to 260 (RPDR), and K330 contribute to the substrate site. Residues D397, H401, D438, H439, and H456 each contribute to the Mn(2+) site.

Belongs to the BPG-independent phosphoglycerate mutase family. In terms of assembly, monomer. Mn(2+) is required as a cofactor.

It catalyses the reaction (2R)-2-phosphoglycerate = (2R)-3-phosphoglycerate. It functions in the pathway carbohydrate degradation; glycolysis; pyruvate from D-glyceraldehyde 3-phosphate: step 3/5. Catalyzes the interconversion of 2-phosphoglycerate and 3-phosphoglycerate. This is 2,3-bisphosphoglycerate-independent phosphoglycerate mutase from Staphylococcus haemolyticus (strain JCSC1435).